The following is a 380-amino-acid chain: Cytochrome b (380 aa).

Transmembrane regions (helical) follow at residues 34 to 54 (FGSLLAVCLITQILTGLLLAM), 78 to 99 (WLIRNLHANGASFFFICIFLHI), 114 to 134 (WNTGVILLLTLMATAFVGYVL), and 179 to 199 (FFALHFLLPFVIAGITIIHLT). Positions 84 and 98 each coordinate heme b. Residues His-183 and His-197 each contribute to the heme b site. His-202 is an a ubiquinone binding site. 4 helical membrane passes run 227–247 (IKDILGLTLMFTPFLMLALFS), 289–309 (LGGVLALAASVLILLLIPFLH), 321–341 (LSQTLFWLLVANLLILTWIGS), and 348–368 (FIIIGQMASLSYFSILLILFP).

This sequence belongs to the cytochrome b family. In terms of assembly, the cytochrome bc1 complex contains 11 subunits: 3 respiratory subunits (MT-CYB, CYC1 and UQCRFS1), 2 core proteins (UQCRC1 and UQCRC2) and 6 low-molecular weight proteins (UQCRH/QCR6, UQCRB/QCR7, UQCRQ/QCR8, UQCR10/QCR9, UQCR11/QCR10 and a cleavage product of UQCRFS1). This cytochrome bc1 complex then forms a dimer. It depends on heme b as a cofactor.

The protein resides in the mitochondrion inner membrane. In terms of biological role, component of the ubiquinol-cytochrome c reductase complex (complex III or cytochrome b-c1 complex) that is part of the mitochondrial respiratory chain. The b-c1 complex mediates electron transfer from ubiquinol to cytochrome c. Contributes to the generation of a proton gradient across the mitochondrial membrane that is then used for ATP synthesis. The sequence is that of Cytochrome b (MT-CYB) from Alectoris rufa (Red-legged partridge).